The chain runs to 259 residues: MSYNYLKAARKIICIGRNYAAHIKELNNSTPKQPFFFLKPTSSIVTPLSSSLVKTTRPANSTFNGLNEDGTNPGPIFIPRGVKVHHEIELALIVSKHLSNVTKMKPEEVYDSISGVALALDLTARNVQDEAKKKGLPWTISKGFDTFMPISAIVSREKFSSYKSNLQDIFRVKCSVNGQLRQDGGTNLMLHPLHKILQHISTMISLEPGDIILTGTPAGVGELKPGDRVHCELLQNNDNIVDMNFECENRPGPYEFRET.

The Mg(2+) site is built by glutamate 87, glutamate 89, and aspartate 121.

It belongs to the FAH family. Requires Mg(2+) as cofactor. The cofactor is Mn(2+).

It localises to the mitochondrion. The enzyme catalyses oxaloacetate = enol-oxaloacetate. Functionally, tautomerase that converts enol-oxaloacetate, a strong inhibitor of succinate dehydrogenase, to the physiological keto form of oxaloacetate. The protein is Oxaloacetate tautomerase FMP41, mitochondrial of Saccharomyces cerevisiae (strain ATCC 204508 / S288c) (Baker's yeast).